Here is a 362-residue protein sequence, read N- to C-terminus: UDP-N-acetylglucosamine--N-acetylmuramyl-(pentapeptide) pyrophosphoryl-undecaprenol N-acetylglucosamine transferase (362 aa).

Residues 14–16, N122, R163, S190, and Q285 each bind UDP-N-acetyl-alpha-D-glucosamine; that span reads TGG.

Belongs to the glycosyltransferase 28 family. MurG subfamily.

It is found in the cell inner membrane. It catalyses the reaction di-trans,octa-cis-undecaprenyl diphospho-N-acetyl-alpha-D-muramoyl-L-alanyl-D-glutamyl-meso-2,6-diaminopimeloyl-D-alanyl-D-alanine + UDP-N-acetyl-alpha-D-glucosamine = di-trans,octa-cis-undecaprenyl diphospho-[N-acetyl-alpha-D-glucosaminyl-(1-&gt;4)]-N-acetyl-alpha-D-muramoyl-L-alanyl-D-glutamyl-meso-2,6-diaminopimeloyl-D-alanyl-D-alanine + UDP + H(+). The protein operates within cell wall biogenesis; peptidoglycan biosynthesis. In terms of biological role, cell wall formation. Catalyzes the transfer of a GlcNAc subunit on undecaprenyl-pyrophosphoryl-MurNAc-pentapeptide (lipid intermediate I) to form undecaprenyl-pyrophosphoryl-MurNAc-(pentapeptide)GlcNAc (lipid intermediate II). This is UDP-N-acetylglucosamine--N-acetylmuramyl-(pentapeptide) pyrophosphoryl-undecaprenol N-acetylglucosamine transferase from Prochlorococcus marinus (strain MIT 9215).